We begin with the raw amino-acid sequence, 1514 residues long: Helicase SWR1 (1514 aa).

The HSA domain maps to 339 to 411; it reads ISYFYKQQDL…EERHKKSLAR (73 aa). A compositionally biased stretch (polar residues) spans 465–480; that stretch reads QVNDDGRSSTPSSDSN. Disordered regions lie at residues 465–524 and 538–641; these read QVND…PTDE and FNGS…KDQV. The span at 484–508 shows a compositional bias: acidic residues; the sequence is SESDDDMDDELSTSSDEDEEVDADV. A compositionally biased stretch (polar residues) spans 513 to 524; sequence SPASTEATPTDE. A compositionally biased stretch (basic and acidic residues) spans 547-563; the sequence is SRNKDEKFPTLDKHESS. The span at 564-586 shows a compositional bias: low complexity; that stretch reads SSESSVMTGEESSIYSSSENESQ. Residues 588–597 are compositionally biased toward basic and acidic residues; sequence ENDRESDDKT. Residues 612-623 show a composition bias toward acidic residues; it reads SDGDLDLDDSED. The 166-residue stretch at 708–873 folds into the Helicase ATP-binding domain; it reads ASLYNNHTNG…WSLLYFLMPQ (166 aa). 721–728 lines the ATP pocket; the sequence is DEMGLGKT. Residues 824 to 827 carry the DEAH box motif; it reads DEAH. The Helicase C-terminal domain occupies 1247–1400; that stretch reads KLQKLAILLQ…NVVIQEGDFT (154 aa). The interval 1469 to 1490 is disordered; the sequence is NDDFDESTEKKAANEEEENHAE. Basic and acidic residues predominate over residues 1475-1490; that stretch reads STEKKAANEEEENHAE.

It belongs to the SNF2/RAD54 helicase family. SWR1 subfamily. As to quaternary structure, component of the SWR1 chromatin-remodeling complex composed of at least ACT1, ARP4, RVB1, RVB2, ARP6, YAF9, VPS71, VPS72, SWC3, SWC4, SWC5, SWC7 and SWR1, and perhaps BDF1.

It localises to the nucleus. The enzyme catalyses ATP + H2O = ADP + phosphate + H(+). In terms of biological role, catalytic component of the SWR1 complex which mediates the ATP-dependent exchange of histone H2A for the H2A variant HZT1 leading to transcriptional regulation of selected genes by chromatin remodeling. The protein is Helicase SWR1 (SWR1) of Saccharomyces cerevisiae (strain ATCC 204508 / S288c) (Baker's yeast).